A 729-amino-acid chain; its full sequence is Phosphoribosylformylglycinamidine synthase subunit PurL (729 aa).

His-54 is an active-site residue. 2 residues coordinate ATP: Tyr-57 and Lys-96. Glu-98 contacts Mg(2+). Residues 99 to 102 and Arg-121 contribute to the substrate site; that span reads SHNH. His-100 acts as the Proton acceptor in catalysis. A Mg(2+)-binding site is contributed by Asp-122. Residue Gln-245 coordinates substrate. A Mg(2+)-binding site is contributed by Asp-273. 317 to 319 is a substrate binding site; the sequence is ETQ. ATP-binding residues include Asp-495 and Gly-532. Asn-533 lines the Mg(2+) pocket. Position 535 (Ser-535) interacts with substrate.

Belongs to the FGAMS family. As to quaternary structure, monomer. Part of the FGAM synthase complex composed of 1 PurL, 1 PurQ and 2 PurS subunits.

Its subcellular location is the cytoplasm. The enzyme catalyses N(2)-formyl-N(1)-(5-phospho-beta-D-ribosyl)glycinamide + L-glutamine + ATP + H2O = 2-formamido-N(1)-(5-O-phospho-beta-D-ribosyl)acetamidine + L-glutamate + ADP + phosphate + H(+). It functions in the pathway purine metabolism; IMP biosynthesis via de novo pathway; 5-amino-1-(5-phospho-D-ribosyl)imidazole from N(2)-formyl-N(1)-(5-phospho-D-ribosyl)glycinamide: step 1/2. Functionally, part of the phosphoribosylformylglycinamidine synthase complex involved in the purines biosynthetic pathway. Catalyzes the ATP-dependent conversion of formylglycinamide ribonucleotide (FGAR) and glutamine to yield formylglycinamidine ribonucleotide (FGAM) and glutamate. The FGAM synthase complex is composed of three subunits. PurQ produces an ammonia molecule by converting glutamine to glutamate. PurL transfers the ammonia molecule to FGAR to form FGAM in an ATP-dependent manner. PurS interacts with PurQ and PurL and is thought to assist in the transfer of the ammonia molecule from PurQ to PurL. This chain is Phosphoribosylformylglycinamidine synthase subunit PurL, found in Staphylococcus saprophyticus subsp. saprophyticus (strain ATCC 15305 / DSM 20229 / NCIMB 8711 / NCTC 7292 / S-41).